A 468-amino-acid chain; its full sequence is Phosphoglucosamine mutase (468 aa).

The Phosphoserine intermediate role is filled by Ser112. Residues Ser112, Asp254, Asp256, and Asp258 each coordinate Mg(2+). A Phosphoserine modification is found at Ser112.

It belongs to the phosphohexose mutase family. Mg(2+) is required as a cofactor. Post-translationally, activated by phosphorylation.

It carries out the reaction alpha-D-glucosamine 1-phosphate = D-glucosamine 6-phosphate. Functionally, catalyzes the conversion of glucosamine-6-phosphate to glucosamine-1-phosphate. This is Phosphoglucosamine mutase from Prochlorococcus marinus (strain MIT 9303).